Here is a 221-residue protein sequence, read N- to C-terminus: Type 3 secretion system stator protein (221 aa).

Belongs to the SctL stator family. As to quaternary structure, the core secretion machinery of the T3SS is composed of approximately 20 different proteins, including cytoplasmic components, a base, an export apparatus and a needle. This subunit is part of the cytosolic complex. Interacts directly with YscN/SctN (T3SS ATPase) and YscQ/SctQ (the major sorting platform component).

It localises to the cytoplasm. Component of the type III secretion system (T3SS), also called injectisome, which is used to inject bacterial effector proteins into eukaryotic host cells. Acts as a regulator of the YscN/SctN ATPase activity. The sequence is that of Type 3 secretion system stator protein from Yersinia pestis.